The primary structure comprises 384 residues: Dual-specificity RNA methyltransferase RlmN (384 aa).

Glu105 acts as the Proton acceptor in catalysis. Residues 111 to 350 (EDDRATLCVS…TIVRKTRGDD (240 aa)) enclose the Radical SAM core domain. A disulfide bridge connects residues Cys118 and Cys355. [4Fe-4S] cluster is bound by residues Cys125, Cys129, and Cys132. Residues 179–180 (GE), Ser211, 233–235 (SLH), and Asn312 each bind S-adenosyl-L-methionine. Cys355 acts as the S-methylcysteine intermediate in catalysis.

This sequence belongs to the radical SAM superfamily. RlmN family. The cofactor is [4Fe-4S] cluster.

The protein resides in the cytoplasm. It catalyses the reaction adenosine(2503) in 23S rRNA + 2 reduced [2Fe-2S]-[ferredoxin] + 2 S-adenosyl-L-methionine = 2-methyladenosine(2503) in 23S rRNA + 5'-deoxyadenosine + L-methionine + 2 oxidized [2Fe-2S]-[ferredoxin] + S-adenosyl-L-homocysteine. The enzyme catalyses adenosine(37) in tRNA + 2 reduced [2Fe-2S]-[ferredoxin] + 2 S-adenosyl-L-methionine = 2-methyladenosine(37) in tRNA + 5'-deoxyadenosine + L-methionine + 2 oxidized [2Fe-2S]-[ferredoxin] + S-adenosyl-L-homocysteine. Its function is as follows. Specifically methylates position 2 of adenine 2503 in 23S rRNA and position 2 of adenine 37 in tRNAs. m2A2503 modification seems to play a crucial role in the proofreading step occurring at the peptidyl transferase center and thus would serve to optimize ribosomal fidelity. This is Dual-specificity RNA methyltransferase RlmN from Shigella flexneri serotype 5b (strain 8401).